The chain runs to 203 residues: Glycerol-3-phosphate acyltransferase (203 aa).

4 helical membrane passes run 7-27, 82-102, 118-138, and 141-161; these read TLLM…VLVC, AVSL…PVFF, APIG…LLLI, and YSSL…WWLD.

The protein belongs to the PlsY family. As to quaternary structure, probably interacts with PlsX.

The protein resides in the cell inner membrane. The catalysed reaction is an acyl phosphate + sn-glycerol 3-phosphate = a 1-acyl-sn-glycero-3-phosphate + phosphate. The protein operates within lipid metabolism; phospholipid metabolism. Its function is as follows. Catalyzes the transfer of an acyl group from acyl-phosphate (acyl-PO(4)) to glycerol-3-phosphate (G3P) to form lysophosphatidic acid (LPA). This enzyme utilizes acyl-phosphate as fatty acyl donor, but not acyl-CoA or acyl-ACP. The sequence is that of Glycerol-3-phosphate acyltransferase from Shewanella baltica (strain OS223).